The following is a 519-amino-acid chain: Chloroethene reductive dehalogenase (519 aa).

A signal peptide (tat-type signal) is located at residues 1–43 (MSKFHKTISRRDFMKGLGLAGAGIGAVAASAPVFHDIDELVSS). 2 consecutive 4Fe-4S ferredoxin-type domains span residues 388-420 (PTPP…QEDE) and 435-465 (LGYR…LENA). Positions 400, 403, 406, 410, 444, 448, 451, and 455 each coordinate [4Fe-4S] cluster.

It belongs to the PceA family. [4Fe-4S] cluster serves as cofactor. Requires corrinoid as cofactor. Post-translationally, predicted to be exported by the Tat system. The position of the signal peptide cleavage has been experimentally proven.

The protein resides in the cell membrane. The catalysed reaction is chloroethene + AH2 = ethene + chloride + A + H(+). The enzyme catalyses (Z)-1,2-dichloroethene + AH2 = chloroethene + chloride + A + H(+). It catalyses the reaction 1,1-dichloroethene + AH2 = chloroethene + chloride + A + H(+). Functionally, catalyzes the reductive dechlorination of chloroethene (or vinyl chloride, VC) to ethene. Can also reduce all dichloroethene (DCE) isomers, but not tetrachloroethene (PCE) or trichloroethene (TCE), at high rates. Reduced methyl viologen can act as the artificial electron donor. The sequence is that of Chloroethene reductive dehalogenase from Dehalococcoides mccartyi (strain VS).